We begin with the raw amino-acid sequence, 750 residues long: MIIRSPEPEVKILVDRDPIKTSFEEWAKPGHFSRTIAKGPETTTWIWNLHADAHDFDSHTSDLEEISRKVFSAHFGQLSIIFLWLSGMYFHGARFSNYEAWLSDPTHIGPSAQVVWPIVGQEILNGDVGGGFRGIQITSGFFQLWRASGITSELQLYCTAIGALVFAALMLFAGWFHYHKAAPKLAWFQDVESMLNHHLAGLLGLGSLSWAGHQVHVSLPINQFLNAGVDPKEIPLPHEFILNRDLLAQLYPSFAEGATPFFTLNWSKYAEFLTFRGGLDPVTGGLWLTDIAHHHLAIAILFLIAGHMYRTNWGIGHGLKDILEAHKGPFTGQGHKGLYEILTTSWHAQLSLNLAMLGSLTIVVAHHMYSMPPYPYLATDYGTQLSLFTHHMWIGGFLIVGAAAHAAIFMVRDYDPTTRYNDLLDRVLRHRDAIISHLNWVCIFLGFHSFGLYIHNDTMSALGRPQDMFSDTAIQLQPVFAQWIQNTHALAPGATAPGATTSTSLAWGGGDLVAVGGKVALLPIPLGTADFLVHHIHAFTIHVTVLILLKGVLFARSSRLIPDKANLGFRFPCDGPGRGGTCQVSAWDHVFLGLFWMYNAISVVIFHFSWKMQSDVWGSISDQGVVTHITGGNFAQSSITINGWLRDFLWAQASQVIQSYGSSLSAYGLFFLGAHFVWAFSLMFLFSGRGYWQELIESIVWAHNKLKVAPATQPRALSIVQGRTVGVTHYLLGGIATTWAFFLARIIAVG.

The next 8 helical transmembrane spans lie at 70 to 93 (VFSA…FHGA), 156 to 179 (LYCT…FHYH), 195 to 219 (LNHH…HVSL), 291 to 309 (IAHH…GHMY), 346 to 369 (WHAQ…HHMY), 385 to 411 (LSLF…IFMV), 433 to 455 (AIIS…LYIH), and 531 to 549 (FLVH…LILL). [4Fe-4S] cluster contacts are provided by cysteine 573 and cysteine 582. The next 2 helical transmembrane spans lie at 589-610 (HVFL…HFSW) and 664-686 (LSAY…MFLF). Histidine 675 contacts chlorophyll a'. Chlorophyll a contacts are provided by methionine 683 and tyrosine 691. Tryptophan 692 provides a ligand contact to phylloquinone. Residues 724–744 (TVGVTHYLLGGIATTWAFFLA) traverse the membrane as a helical segment.

It belongs to the PsaA/PsaB family. As to quaternary structure, the PsaA/B heterodimer binds the P700 chlorophyll special pair and subsequent electron acceptors. PSI consists of a core antenna complex that captures photons, and an electron transfer chain that converts photonic excitation into a charge separation. The eukaryotic PSI reaction center is composed of at least 11 subunits. Requires P700 is a chlorophyll a/chlorophyll a' dimer, A0 is one or more chlorophyll a, A1 is one or both phylloquinones and FX is a shared 4Fe-4S iron-sulfur center. as cofactor.

It localises to the plastid. It is found in the chloroplast thylakoid membrane. It catalyses the reaction reduced [plastocyanin] + hnu + oxidized [2Fe-2S]-[ferredoxin] = oxidized [plastocyanin] + reduced [2Fe-2S]-[ferredoxin]. Its function is as follows. PsaA and PsaB bind P700, the primary electron donor of photosystem I (PSI), as well as the electron acceptors A0, A1 and FX. PSI is a plastocyanin-ferredoxin oxidoreductase, converting photonic excitation into a charge separation, which transfers an electron from the donor P700 chlorophyll pair to the spectroscopically characterized acceptors A0, A1, FX, FA and FB in turn. Oxidized P700 is reduced on the lumenal side of the thylakoid membrane by plastocyanin. In Oenothera elata subsp. hookeri (Hooker's evening primrose), this protein is Photosystem I P700 chlorophyll a apoprotein A1.